The chain runs to 284 residues: MTHNHDPYSDAQALKGLTLGQATQYQAEYDPSLLQGVPRKLNRDAIELTTELPFHGTDIWTGYELSWLNGKGKPVVAILQVHLDIHSVNLIESKSFKLYLNSLNQTRFNNLDAVKDTLTTDLSQCAQGEVTVKIIEPKHFTIERISELPGNCIDDLDIEIFDYQFNPEYLLDSTEEKNVAETLTSNLLKSNCLITSQPDWGSVMIRYQGPKIDREKLLRYLISFRQHNEFHEQCVERIFMDLKQYCHCAKLTVYARYTRRGGLDINPFRSDFEQAPDSHRLARQ.

91–93 is a binding site for substrate; sequence IES. 93-94 is a binding site for NADPH; sequence SK. Cys192 acts as the Thioimide intermediate in catalysis. Catalysis depends on Asp199, which acts as the Proton donor. 231–232 contacts substrate; sequence HE. 260–261 serves as a coordination point for NADPH; sequence RG.

This sequence belongs to the GTP cyclohydrolase I family. QueF type 2 subfamily. As to quaternary structure, homodimer.

Its subcellular location is the cytoplasm. The enzyme catalyses 7-aminomethyl-7-carbaguanine + 2 NADP(+) = 7-cyano-7-deazaguanine + 2 NADPH + 3 H(+). It functions in the pathway tRNA modification; tRNA-queuosine biosynthesis. In terms of biological role, catalyzes the NADPH-dependent reduction of 7-cyano-7-deazaguanine (preQ0) to 7-aminomethyl-7-deazaguanine (preQ1). This chain is NADPH-dependent 7-cyano-7-deazaguanine reductase, found in Shewanella denitrificans (strain OS217 / ATCC BAA-1090 / DSM 15013).